The following is a 265-amino-acid chain: Hydroxyethylthiazole kinase (265 aa).

Met-43 is a binding site for substrate. Positions 118 and 165 each coordinate ATP. Gly-192 contributes to the substrate binding site.

Belongs to the Thz kinase family. The cofactor is Mg(2+).

It carries out the reaction 5-(2-hydroxyethyl)-4-methylthiazole + ATP = 4-methyl-5-(2-phosphooxyethyl)-thiazole + ADP + H(+). The protein operates within cofactor biosynthesis; thiamine diphosphate biosynthesis; 4-methyl-5-(2-phosphoethyl)-thiazole from 5-(2-hydroxyethyl)-4-methylthiazole: step 1/1. Functionally, catalyzes the phosphorylation of the hydroxyl group of 4-methyl-5-beta-hydroxyethylthiazole (THZ). This Pyrococcus abyssi (strain GE5 / Orsay) protein is Hydroxyethylthiazole kinase.